The sequence spans 96 residues: Large ribosomal subunit protein bL27 (96 aa).

The propeptide occupies 1 to 9; the sequence is MLRLDLQFF. The disordered stretch occupies residues 1–36; that stretch reads MLRLDLQFFSTKKGQGSSKNGRDSESKRLGSKRADG. The segment covering 8–19 has biased composition (polar residues); the sequence is FFSTKKGQGSSK. A compositionally biased stretch (basic and acidic residues) spans 20-35; the sequence is NGRDSESKRLGSKRAD.

The protein belongs to the bacterial ribosomal protein bL27 family. The N-terminus is cleaved by ribosomal processing cysteine protease Prp.

The polypeptide is Large ribosomal subunit protein bL27 (Oceanobacillus iheyensis (strain DSM 14371 / CIP 107618 / JCM 11309 / KCTC 3954 / HTE831)).